We begin with the raw amino-acid sequence, 804 residues long: Cas scaffolding protein family member 4 (804 aa).

An SH3 domain is found at Pro11–Glu73. Residues Ser200 and Ser297 each carry the phosphoserine modification. Disordered regions lie at residues Leu369–Arg395, Gln607–Ser628, and Gln642–Lys686. Residues Pro380 to Ser390 show a composition bias toward polar residues. Residues Glu649–Asp664 show a composition bias toward basic and acidic residues.

Belongs to the CAS family. As to quaternary structure, interacts (via SH3 domain) with PTK2/FAK1 (via C-terminus). Post-translationally, phosphorylated on tyrosines by SRC.

The protein resides in the cytoplasm. It localises to the cytoskeleton. The protein localises to the cell junction. It is found in the focal adhesion. Its function is as follows. Docking protein that plays a role in tyrosine kinase-based signaling related to cell adhesion and cell spreading. Regulates PTK2/FAK1 activity, focal adhesion integrity, and cell spreading. The protein is Cas scaffolding protein family member 4 of Mus musculus (Mouse).